The following is a 171-amino-acid chain: Crossover junction endodeoxyribonuclease RuvC (171 aa).

Active-site residues include Asp-11, Glu-71, and Asp-143. Mg(2+)-binding residues include Asp-11, Glu-71, and Asp-143.

It belongs to the RuvC family. Homodimer which binds Holliday junction (HJ) DNA. The HJ becomes 2-fold symmetrical on binding to RuvC with unstacked arms; it has a different conformation from HJ DNA in complex with RuvA. In the full resolvosome a probable DNA-RuvA(4)-RuvB(12)-RuvC(2) complex forms which resolves the HJ. Mg(2+) is required as a cofactor.

It is found in the cytoplasm. It catalyses the reaction Endonucleolytic cleavage at a junction such as a reciprocal single-stranded crossover between two homologous DNA duplexes (Holliday junction).. In terms of biological role, the RuvA-RuvB-RuvC complex processes Holliday junction (HJ) DNA during genetic recombination and DNA repair. Endonuclease that resolves HJ intermediates. Cleaves cruciform DNA by making single-stranded nicks across the HJ at symmetrical positions within the homologous arms, yielding a 5'-phosphate and a 3'-hydroxyl group; requires a central core of homology in the junction. The consensus cleavage sequence is 5'-(A/T)TT(C/G)-3'. Cleavage occurs on the 3'-side of the TT dinucleotide at the point of strand exchange. HJ branch migration catalyzed by RuvA-RuvB allows RuvC to scan DNA until it finds its consensus sequence, where it cleaves and resolves the cruciform DNA. This is Crossover junction endodeoxyribonuclease RuvC from Bartonella tribocorum (strain CIP 105476 / IBS 506).